Consider the following 221-residue polypeptide: MDTLDELLPREKMLRSGIASLSDVELLALFLRTGTPGKDVITLAKEMLQRFGSLYGLLSADFAQFRGINGIGLAKFAQLKGIAELARRYYSVRMNEEDALLSPEMTLEFLQSQLTGEEREIFLVIFLDAQHRVLQHSRLFSGTLSHVEVHPREIVREAIKLNASAVILAHNHPSGCAEPSKADKHITDRVIKCCQFMDIRVLDHLIIGRGEYVSFAERGWI.

Positions Ala99–Ile221 constitute an MPN domain. His170, His172, and Asp183 together coordinate Zn(2+). The JAMM motif motif lies at His170–Asp183.

It belongs to the UPF0758 family. YicR subfamily.

The sequence is that of UPF0758 protein YicR from Salmonella arizonae (strain ATCC BAA-731 / CDC346-86 / RSK2980).